The following is a 418-amino-acid chain: Glutamyl-tRNA reductase (418 aa).

Substrate-binding positions include 49 to 52 (TCNR), Ser-109, 114 to 116 (EPQ), and Gln-120. Cys-50 (nucleophile) is an active-site residue. 189–194 (GAGETI) contacts NADP(+).

The protein belongs to the glutamyl-tRNA reductase family. As to quaternary structure, homodimer.

The catalysed reaction is (S)-4-amino-5-oxopentanoate + tRNA(Glu) + NADP(+) = L-glutamyl-tRNA(Glu) + NADPH + H(+). The protein operates within porphyrin-containing compound metabolism; protoporphyrin-IX biosynthesis; 5-aminolevulinate from L-glutamyl-tRNA(Glu): step 1/2. Its function is as follows. Catalyzes the NADPH-dependent reduction of glutamyl-tRNA(Glu) to glutamate 1-semialdehyde (GSA). The protein is Glutamyl-tRNA reductase of Escherichia coli O45:K1 (strain S88 / ExPEC).